Consider the following 245-residue polypeptide: Eukaryotic translation initiation factor 6 (245 aa).

Position 113 is a phosphotyrosine (tyrosine 113). A Phosphothreonine modification is found at threonine 165. A Phosphoserine modification is found at serine 166. Residues serine 174 and serine 175 each carry the phosphoserine; by CK1 modification. Serine 235 carries the post-translational modification Phosphoserine; by PKC. Residues serine 239 and serine 243 each carry the phosphoserine modification.

Belongs to the eIF-6 family. As to quaternary structure, monomer. Associates with the 60S ribosomal subunit. Interacts with RACK1. Interacts with DICER1, AGO2, TARBP2, MOV10 and RPL7A; they form a large RNA-induced silencing complex (RISC). Post-translationally, phosphorylation at Ser-174 and Ser-175 by CSNK1D/CK1 promotes nuclear export. Ufmylated by UFL1.

Its subcellular location is the cytoplasm. It localises to the nucleus. It is found in the nucleolus. In terms of biological role, binds to the 60S ribosomal subunit and prevents its association with the 40S ribosomal subunit to form the 80S initiation complex in the cytoplasm. Behaves as a stimulatory translation initiation factor downstream insulin/growth factors. Is also involved in ribosome biogenesis. Associates with pre-60S subunits in the nucleus and is involved in its nuclear export. Cytoplasmic release of TIF6 from 60S subunits and nuclear relocalization is promoted by a RACK1 (RACK1)-dependent protein kinase C activity. In tissues responsive to insulin, controls fatty acid synthesis and glycolysis by exerting translational control of adipogenic transcription factors such as CEBPB, CEBPD and ATF4 that have G/C rich or uORF in their 5'UTR. Required for ROS-dependent megakaryocyte maturation and platelets formation, controls the expression of mitochondrial respiratory chain genes involved in reactive oxygen species (ROS) synthesis. Involved in miRNA-mediated gene silencing by the RNA-induced silencing complex (RISC). Required for both miRNA-mediated translational repression and miRNA-mediated cleavage of complementary mRNAs by RISC. Modulates cell cycle progression and global translation of pre-B cells, its activation seems to be rate-limiting in tumorigenesis and tumor growth. The sequence is that of Eukaryotic translation initiation factor 6 from Bos taurus (Bovine).